We begin with the raw amino-acid sequence, 146 residues long: Large ribosomal subunit protein uL15 (146 aa).

Positions methionine 1–arginine 13 are enriched in basic and acidic residues. Residues methionine 1–glutamate 51 are disordered. Composition is skewed to gly residues over residues threonine 23–glutamine 35 and serine 42–glutamate 51.

It belongs to the universal ribosomal protein uL15 family. As to quaternary structure, part of the 50S ribosomal subunit.

Its function is as follows. Binds to the 23S rRNA. The protein is Large ribosomal subunit protein uL15 of Streptococcus pneumoniae serotype 2 (strain D39 / NCTC 7466).